A 400-amino-acid chain; its full sequence is Elongation factor Tu (400 aa).

Positions 10 to 209 constitute a tr-type G domain; the sequence is KPHVNIGTIG…NVDAYIPTPE (200 aa). Residues 19-26 are G1; sequence GHVDHGKT. 19 to 26 provides a ligand contact to GTP; it reads GHVDHGKT. Residue T26 participates in Mg(2+) binding. Residues 60–64 are G2; the sequence is GITIN. A G3 region spans residues 81 to 84; it reads DCPG. Residues 81 to 85 and 136 to 139 each bind GTP; these read DCPGH and NKSD. The interval 136–139 is G4; the sequence is NKSD. A G5 region spans residues 174–176; it reads SGL.

The protein belongs to the TRAFAC class translation factor GTPase superfamily. Classic translation factor GTPase family. EF-Tu/EF-1A subfamily. In terms of assembly, monomer.

The protein localises to the cytoplasm. The catalysed reaction is GTP + H2O = GDP + phosphate + H(+). In terms of biological role, GTP hydrolase that promotes the GTP-dependent binding of aminoacyl-tRNA to the A-site of ribosomes during protein biosynthesis. This chain is Elongation factor Tu, found in Desulforamulus reducens (strain ATCC BAA-1160 / DSM 100696 / MI-1) (Desulfotomaculum reducens).